A 1580-amino-acid chain; its full sequence is Dynamin-binding protein (1580 aa).

Methionine 1 is modified (N-acetylmethionine). SH3 domains lie at 2-61 (EPGS…IVTI), 66-127 (EGER…ELCL), and 146-205 (YSLG…LLGP). 4 disordered regions span residues 211 to 245 (ESVNSRSGDDSAVNGEVDVPPEEAESGGDEDDQQS), 304 to 446 (NRTE…LVPL), 500 to 546 (YAQK…DSLD), and 589 to 688 (RGSS…AQTF). Positions 229–243 (VPPEEAESGGDEDDQ) are enriched in acidic residues. The SH3 4 domain occupies 244–303 (QSGTYGIALYRFQALETNELDFEVGDRIQILGTLEDGWLEGCLKGKTGVFPHRFVKLCPS). Composition is skewed to polar residues over residues 422–439 (QKSQHYLTAGGSHQTSDP) and 502–513 (QKHQTSTENTAS). Basic and acidic residues predominate over residues 516-527 (DPPERPERRPGL). Positions 608–617 (RPPPPRPRTP) are enriched in pro residues. Residues 671–682 (APEKEDSEHMEK) are compositionally biased toward basic and acidic residues. Position 683 is a phosphoserine (serine 683). The stretch at 694 to 755 (LARIRDVEQD…LELQQLRDMT (62 aa)) forms a coiled coil. In terms of domain architecture, DH spans 783–970 (KRAKVVAELL…KEINVNINEY (188 aa)). Positions 1011–1220 (LKHLTGFAPQ…LKATDREGNL (210 aa)) constitute a BAR domain. Residues 1288-1351 (PPEKLFHVQR…YSSFLKPYNP (64 aa)) enclose the SH3 5 domain. The segment covering 1356–1365 (SDASVASHSS) has biased composition (low complexity). Disordered stretches follow at residues 1356–1384 (SDASVASHSSTESEHSGSSPGCHRQNSHS) and 1426–1514 (TGHP…GSSE). The span at 1426–1440 (TGHPETGPSTCSSDP) shows a compositional bias: polar residues. The SH3 6 domain maps to 1516 to 1579 (EGNQVYFAIY…PSNYIRKTEY (64 aa)).

Binds DNM1 via its N-terminal SH3 domains. The C-terminal SH3 domain binds a complex containing actin, tubulin, Hsp70 and actin-regulatory proteins, such as ENAH, EVL, WIRE, CR16, WAVE1 and NAP1L1. Interacts with FASLG. Interacts (via SH3 domain 6) with WASL. Interacts (via SH3 domain 6) interacts with ENAH. Interacts (via C-terminal domain) with TJP1; required for the apical cell-cell junction localization of DNMBP.

The protein localises to the cytoplasm. It is found in the golgi apparatus. The protein resides in the golgi stack. Its subcellular location is the cytoskeleton. It localises to the synapse. The protein localises to the cell junction. Functionally, plays a critical role as a guanine nucleotide exchange factor (GEF) for CDC42 in several intracellular processes associated with the actin and microtubule cytoskeleton. Regulates the structure of apical junctions in epithelial cells. Participates in the normal lumenogenesis of epithelial cell cysts by regulating spindle orientation. Plays a role in ciliogenesis. May play a role in membrane trafficking between the cell surface and the Golgi. The sequence is that of Dynamin-binding protein from Mus musculus (Mouse).